A 315-amino-acid polypeptide reads, in one-letter code: Heme oxygenase 2 (315 aa).

Over residues 1–15 (MSSEVETSEGVDESE) the composition is skewed to polar residues. The tract at residues 1–29 (MSSEVETSEGVDESENNSTAPEKENHTKM) is disordered. Position 2 is an N-acetylserine (serine 2). Serine 2 carries the post-translational modification Phosphoserine. The Cytoplasmic segment spans residues 2–294 (SSEVETSEGV…TAMAVLRKPS (293 aa)). Heme b contacts are provided by histidine 44, tyrosine 153, lysine 198, and arginine 202. HRM repeat units lie at residues 263-268 (KCPFYA) and 280-285 (NCPFRT). Residues cysteine 264 and cysteine 281 each carry the S-nitrosocysteine modification. The chain crosses the membrane as a helical; Anchor for type IV membrane protein span at residues 295–315 (LQLILAASVALVAGLLAWYYM).

It belongs to the heme oxygenase family. In terms of processing, a soluble form arises by proteolytic removal of the membrane anchor. Post-translationally, S-nitrosylated by BLVRB. Widely distributed in body with a high concentration in the brain.

It localises to the microsome membrane. It is found in the endoplasmic reticulum membrane. It catalyses the reaction heme b + 3 reduced [NADPH--hemoprotein reductase] + 3 O2 = biliverdin IXalpha + CO + Fe(2+) + 3 oxidized [NADPH--hemoprotein reductase] + 3 H2O + H(+). Its activity is regulated as follows. Inhibited by metalloporphyrins such as Sn- and Zn-protoporphyrins. Its function is as follows. Catalyzes the oxidative cleavage of heme at the alpha-methene bridge carbon, released as carbon monoxide (CO), to generate biliverdin IXalpha, while releasing the central heme iron chelate as ferrous iron. In Rattus norvegicus (Rat), this protein is Heme oxygenase 2 (Hmox2).